We begin with the raw amino-acid sequence, 1212 residues long: uncharacterized protein (1212 aa).

Positions 1–31 are enriched in polar residues; the sequence is MASIQTKLVSQPQTQQPLQNGFFNNYQQNIY. Disordered stretches follow at residues 1-70, 119-169, 211-231, 248-374, 655-681, 935-957, and 973-1125; these read MASI…HLQQ, PQAQ…FGTN, SLNNSLNSSGNNSTLNTSNNN, INIG…NNNK, QQQPQQLNQNPPNQQLPQQPNQITQQQ, NQNQNNNNNNNNNNNNNINCNNA, and QLQP…QQLQ. Low complexity-rich tracts occupy residues 48–70 and 119–163; these read PQQQPILPQQPQPQSQQPLHLQQ and PQAQ…NNNN. Low complexity predominate over residues 256-275; the sequence is NNSNTNNVNNINTNNTNNNN. 2 stretches are compositionally biased toward polar residues: residues 276–285 and 292–317; these read KSGSIDQFGS and YVNSSSNSAIPTPPTNQTNGSNSHSP. The segment covering 322–340 has biased composition (low complexity); sequence INSNININSNLQSPQNIQQ. Residues 341–351 are compositionally biased toward polar residues; the sequence is TILSPNISPNH. Residues 352–373 show a composition bias toward low complexity; the sequence is NNNNNNNNNNNNNNNNNNNNNN. Composition is skewed to low complexity over residues 998 to 1022 and 1037 to 1125; these read NSVNNNINNNFINNNSFVNNNNNNN and QNNN…QQLQ.

This is an uncharacterized protein from Dictyostelium discoideum (Social amoeba).